The following is a 1350-amino-acid chain: Nicotinate hydroxylase hnxS (1350 aa).

Residues cysteine 49, cysteine 54, cysteine 89, cysteine 92, cysteine 133, and cysteine 135 each contribute to the [2Fe-2S] cluster site. The segment at 164-193 is disordered; the sequence is LVGTEEETESDMGAHSGSGDTGSRSSGSCG. Residues 180–192 are compositionally biased toward low complexity; sequence GSGDTGSRSSGSC. The 190-residue stretch at 256 to 445 folds into the FAD-binding PCMH-type domain; that stretch reads YGDAEQAWVK…TKIAVPMPSK (190 aa). Residues 284–291, 379–383, aspartate 392, and lysine 455 each bind FAD; these read LVTGASEV and CLAGN. Positions 793 and 824 each coordinate Mo-molybdopterin. Substrate-binding residues include glutamate 828 and arginine 906. Mo-molybdopterin contacts are provided by arginine 938 and alanine 1107. Glutamate 1281 (proton acceptor) is an active-site residue.

It belongs to the xanthine dehydrogenase family. It depends on [2Fe-2S] cluster as a cofactor. The cofactor is FAD. Requires Mo-molybdopterin as cofactor.

Its activity is regulated as follows. Allopurinol inhibits catalytic activity in a linear fashion. Its function is as follows. Nicotinate hydroxylase, part of the hnx cluster involved in the purine degradation. The nicotinate hydroxylase hnxS accepts nicotinate as a substrate and catalyzes the first step of nicotinate catabolism. HnxS also accepts hypoxanthine, but not xanthine, as a substrate. The major facilitator-type transporters hxnP and hxnZ are probably involved in the uptake of nicotinate-derived metabolites, and the oxidoreductases hxnT and hxnY in the further metabolism of 6-OH nicotinic acid. The polypeptide is Nicotinate hydroxylase hnxS (Emericella nidulans (strain FGSC A4 / ATCC 38163 / CBS 112.46 / NRRL 194 / M139) (Aspergillus nidulans)).